The chain runs to 359 residues: 3-dehydroquinate synthase (359 aa).

NAD(+) is bound by residues 72–77 (EGEEHK), 106–110 (GVVGD), 130–131 (TT), K143, K152, and 170–173 (TLTT). Zn(2+)-binding residues include E185, H248, and H265.

It belongs to the sugar phosphate cyclases superfamily. Dehydroquinate synthase family. It depends on Co(2+) as a cofactor. Requires Zn(2+) as cofactor. NAD(+) is required as a cofactor.

The protein resides in the cytoplasm. The enzyme catalyses 7-phospho-2-dehydro-3-deoxy-D-arabino-heptonate = 3-dehydroquinate + phosphate. Its pathway is metabolic intermediate biosynthesis; chorismate biosynthesis; chorismate from D-erythrose 4-phosphate and phosphoenolpyruvate: step 2/7. In terms of biological role, catalyzes the conversion of 3-deoxy-D-arabino-heptulosonate 7-phosphate (DAHP) to dehydroquinate (DHQ). The chain is 3-dehydroquinate synthase from Pelobacter propionicus (strain DSM 2379 / NBRC 103807 / OttBd1).